The chain runs to 632 residues: Maltase 1 (632 aa).

Residues 1–29 (MEEGERWREGHVYQRSSETRKPTNYDRPD) are compositionally biased toward basic and acidic residues. A disordered region spans residues 1 to 30 (MEEGERWREGHVYQRSSETRKPTNYDRPDS). N-linked (GlcNAc...) asparagine glycans are attached at residues Asn179 and Asn212. Asp280 functions as the Nucleophile in the catalytic mechanism. N-linked (GlcNAc...) asparagine glycosylation is present at Asn333. The active-site Proton donor is Glu348. N-linked (GlcNAc...) asparagine glycosylation is found at Asn461, Asn575, and Asn578.

Belongs to the glycosyl hydrolase 13 family.

It carries out the reaction Hydrolysis of terminal, non-reducing (1-&gt;4)-linked alpha-D-glucose residues with release of alpha-D-glucose.. This Drosophila virilis (Fruit fly) protein is Maltase 1 (Mal-B1).